The primary structure comprises 827 residues: Zinc phosphodiesterase ELAC protein 2 (827 aa).

The N-terminal 16 residues, 1-16 (MWALRSLLRPLGLRTM), are a transit peptide targeting the mitochondrion. Disordered stretches follow at residues 15-46 (TMSQ…GWGP) and 181-220 (SERR…QCLP). Positions 181–192 (SERRCGEQEPSR) are enriched in basic and acidic residues. Residues S193, S197, S202, S207, S617, and S735 each carry the phosphoserine modification. The span at 199-210 (NRLSPKQSSSDP) shows a compositional bias: polar residues. The segment at 794–827 (LTQQADSSEDREPHQKRAHSEEPHSPQSKKVRAQ) is disordered. Position 795 is a phosphothreonine (T795). S800 carries the phosphoserine modification. Residues 801 to 817 (SEDREPHQKRAHSEEPH) show a composition bias toward basic and acidic residues. S818 carries the post-translational modification Phosphoserine.

The protein belongs to the RNase Z family. In terms of assembly, homodimer. Interacts with PTCD1. The cofactor is Zn(2+).

The protein resides in the mitochondrion. It is found in the mitochondrion matrix. It localises to the mitochondrion nucleoid. The protein localises to the nucleus. The enzyme catalyses Endonucleolytic cleavage of RNA, removing extra 3' nucleotides from tRNA precursor, generating 3' termini of tRNAs. A 3'-hydroxy group is left at the tRNA terminus and a 5'-phosphoryl group is left at the trailer molecule.. Functionally, zinc phosphodiesterase, which displays mitochondrial tRNA 3'-processing endonuclease activity. Involved in tRNA maturation, by removing a 3'-trailer from precursor tRNA. Associates with mitochondrial DNA complexes at the nucleoids to initiate RNA processing and ribosome assembly. In Rattus norvegicus (Rat), this protein is Zinc phosphodiesterase ELAC protein 2 (Elac2).